Reading from the N-terminus, the 343-residue chain is N-acetyl-gamma-glutamyl-phosphate reductase (343 aa).

Cys-148 is a catalytic residue.

This sequence belongs to the NAGSA dehydrogenase family. Type 1 subfamily.

It is found in the cytoplasm. It catalyses the reaction N-acetyl-L-glutamate 5-semialdehyde + phosphate + NADP(+) = N-acetyl-L-glutamyl 5-phosphate + NADPH + H(+). Its pathway is amino-acid biosynthesis; L-arginine biosynthesis; N(2)-acetyl-L-ornithine from L-glutamate: step 3/4. Its function is as follows. Catalyzes the NADPH-dependent reduction of N-acetyl-5-glutamyl phosphate to yield N-acetyl-L-glutamate 5-semialdehyde. This Caldicellulosiruptor saccharolyticus (strain ATCC 43494 / DSM 8903 / Tp8T 6331) protein is N-acetyl-gamma-glutamyl-phosphate reductase.